Here is a 245-residue protein sequence, read N- to C-terminus: MATSLTPADPLQEAAIVLFSGGQDSATCLAWALSRFGRVETVGFDYGQRHAVELACRARLRDGMAALDPDWATRLGQDHTLALDALGTVSDTALTRDAAITMNENGLPSTFVPGRNLIFLTFAAALAARRGARHIVGGMCETDYSGYPDCRDDTIKAMQVALNLGMASRYVLHTPLMWIDKAETWRMAEGLGGADLVELINRESHSCYLGVRDVMHPWGHGCGTCPACMLRRAGWERYVADGADA.

19 to 29 is a binding site for ATP; it reads FSGGQDSATCL. Zn(2+) contacts are provided by C207, C222, C225, and C228.

It belongs to the QueC family. Requires Zn(2+) as cofactor.

It carries out the reaction 7-carboxy-7-deazaguanine + NH4(+) + ATP = 7-cyano-7-deazaguanine + ADP + phosphate + H2O + H(+). It functions in the pathway purine metabolism; 7-cyano-7-deazaguanine biosynthesis. Catalyzes the ATP-dependent conversion of 7-carboxy-7-deazaguanine (CDG) to 7-cyano-7-deazaguanine (preQ(0)). This chain is 7-cyano-7-deazaguanine synthase, found in Gluconacetobacter diazotrophicus (strain ATCC 49037 / DSM 5601 / CCUG 37298 / CIP 103539 / LMG 7603 / PAl5).